The sequence spans 1040 residues: DIS3-like exonuclease 1 (1040 aa).

Residues alanine 232 to asparagine 310 form the CSD1 domain. In terms of domain architecture, CSD2 spans valine 360–asparagine 426. The RNB domain occupies arginine 459 to asparagine 808.

It belongs to the RNR ribonuclease family. In terms of assembly, component of the RNA exosome complex. Mg(2+) serves as cofactor.

The protein resides in the cytoplasm. It carries out the reaction Exonucleolytic cleavage in the 3'- to 5'-direction to yield nucleoside 5'-phosphates.. In terms of biological role, catalytic component of the RNA exosome complex which has 3'-&gt;5' exoribonuclease activity and participates in a multitude of cellular RNA processing and degradation events. This is DIS3-like exonuclease 1 (dis3l) from Xenopus laevis (African clawed frog).